The primary structure comprises 824 residues: Silver exporting P-type ATPase (824 aa).

A disordered region spans residues 89-112 (ASEHHHHHDHHEVSPDKIKQSHRQ). Basic and acidic residues predominate over residues 98-112 (HHEVSPDKIKQSHRQ). 6 helical membrane-spanning segments follow: residues 167–187 (FWLG…SHLF), 200–220 (TWLQ…PFFA), 234–254 (FTLV…ATVF), 268–288 (LVAI…LGQV), 427–447 (WFVP…SVWG), and 455–475 (GLIA…GLAT). Aspartate 511 (4-aspartylphosphate intermediate) is an active-site residue. 2 consecutive transmembrane segments (helical) span residues 764–784 (IRQN…VAAG) and 785–805 (LLYP…AMAL).

It belongs to the cation transport ATPase (P-type) (TC 3.A.3) family. Type IB subfamily.

It localises to the cell membrane. The catalysed reaction is Ag(+)(in) + ATP + H2O = Ag(+)(out) + ADP + phosphate + H(+). Component of the sil cation-efflux system that confers resistance to silver. The sequence is that of Silver exporting P-type ATPase (silP) from Salmonella typhimurium.